The sequence spans 324 residues: Casein kinase I (324 aa).

Positions 9–278 (YALGKKLGSG…LRRLLKDLFI (270 aa)) constitute a Protein kinase domain. Residues 15 to 23 (LGSGSFGDI) and Lys38 each bind ATP. The Proton acceptor role is filled by Asp128.

It belongs to the protein kinase superfamily. CK1 Ser/Thr protein kinase family. Casein kinase I subfamily. Interacts with rhoptry protein RON3; the interaction is direct. Interacts with CK2alpha; the interaction is direct. Interacts with nucleosome assembly protein NAPL. Interacts with RAB5b. Interacts with host GAPVD1. Interacts with host SNX22. The cofactor is Mg(2+).

The protein localises to the cytoplasm. It localises to the cytoplasmic vesicle. It is found in the secretory vesicle. Its subcellular location is the microneme. The protein resides in the secreted. The protein localises to the host cell surface. It catalyses the reaction L-seryl-[protein] + ATP = O-phospho-L-seryl-[protein] + ADP + H(+). The enzyme catalyses L-threonyl-[protein] + ATP = O-phospho-L-threonyl-[protein] + ADP + H(+). Its function is as follows. Serine/threonine-protein kinase likely to be involved in many cellular processes. Phosphorylates rhoptry protein RON3, nucleosome assembly protein NAPL and DNA/RNA-binding protein ALBA4 in vitro. This Plasmodium falciparum (isolate Dd2) protein is Casein kinase I.